We begin with the raw amino-acid sequence, 268 residues long: Interleukin-1 beta (268 aa).

The propeptide occupies 1 to 116 (MAEVPELASE…TRNNDACVHD (116 aa)).

This sequence belongs to the IL-1 family. As to quaternary structure, monomer. In its precursor form, weakly interacts with full-length MEFV; the mature cytokine does not interact at all. Interacts with integrins ITGAV:ITGBV and ITGA5:ITGB1; integrin-binding is required for IL1B signaling. Interacts with cargo receptor TMED10; the interaction is direct and is required for the secretion of IL1B mature form. Interacts with HSP90AB1; the interaction facilitates cargo translocation into the ERGIC. Interacts with HSP90B1; the interaction facilitates cargo translocation into the ERGIC.

The protein localises to the cytoplasm. Its subcellular location is the cytosol. It localises to the secreted. The protein resides in the lysosome. It is found in the extracellular exosome. Functionally, potent pro-inflammatory cytokine. Initially discovered as the major endogenous pyrogen, induces prostaglandin synthesis, neutrophil influx and activation, T-cell activation and cytokine production, B-cell activation and antibody production, and fibroblast proliferation and collagen production. Promotes Th17 differentiation of T-cells. Synergizes with IL12/interleukin-12 to induce IFNG synthesis from T-helper 1 (Th1) cells. Plays a role in angiogenesis by inducing VEGF production synergistically with TNF and IL6. Involved in transduction of inflammation downstream of pyroptosis: its mature form is specifically released in the extracellular milieu by passing through the gasdermin-D (GSDMD) pore. This Macaca fascicularis (Crab-eating macaque) protein is Interleukin-1 beta (IL1B).